The primary structure comprises 1588 residues: MVQLAKVPILGNDIIHVGYNIHDHLVETIIKHCPSSTYVICNDTNLSKVPYYQQLVLEFKASLPEGSRLLTYVVKPGETSKSRETKAQLEDYLLVEGCTRDTVMVAIGGGVIGDMIGFVASTFMRGVRVVQVPTSLLAMVDSSIGGKTAIDTPLGKNFIGAFWQPKFVLVDIKWLETLAKREFINGMAEVIKTACIWNADEFTRLESNASLFLNVVNGEKNVKVTNQLTNEIDEISNTDIEAMLDHTYKLVLESIKVKAEVVSSDERESSLRNLLNFGHSIGHAYEAILTPQALHGECVSIGMVKEAELSRYFGILSPTQVARLSKILVAYGLPVSPDEKWFKELTLHKKTPLDILLKKMSIDKKNEGSKKKVVILESIGKCYGDSAQFVSDEDLRFILTDETLVYPFKDIPADQQKVVIPPGSKSISNRALILAALGEGQCKIKNLLHSDDTKHMLTAVHELKGATISWEDNGETVVVEGHGGSTLSACADPLYLGNAGTASRFLTSLAALVNSTPSQKYIVLTGNARMQQRPIAPLVDSLRANGTKIEYLNNEGSLPIKVYTDSVFKGGRIELAATVSSQYVSSILMCAPYAEEPVTLALVGGKPISKLYVDMTIKMMEKFGINVETSTTEPYTYYIPKGHYINPSEYVIESDASSATYPLAFAAMTGTTVTVPNIGFESLQGDARFARDVLKPMGCKITQTATSTTVSGPPVGTLKPLKHVDMEPMTDAFLTACVVAAISHDSDPNSANTTTIEGIANQRVKECNRILAMATELAKFGVKTTELPDGIQVHGLNSIKDLKVPSDSSGPVGVCTYDDHRVAMSFSLLAGMVNSQNERDEVANPVRILERHCTGKTWPGWWDVLHSELGAKLDGAEPLECTSKKNSKKSVVIIGMRAAGKTTISKWCASALGYKLVDLDELFEQQHNNQSVKQFVVENGWEKFREEETRIFKEVIQNYGDDGYVFSTGGGIVESAESRKALKDFASSGGYVLHLHRDIEETIVFLQSDPSRPAYVEEIREVWNRREGWYKECSNFSFFAPHCSAEAEFQALRRSFSKYIATITGVREIEIPSGRSAFVCLTFDDLTEQTENLTPICYGCEAVEVRVDHLANYSADFVSKQLSILRKATDSIPIIFTVRTMKQGGNFLDEEFKTLRELYDIALKNGVEFLDLELTLPTDIQYEVINKRGNTKIIGSHHDFQGLYSWDDAEWENRFNQALTLDVDVVKFVGTAVNFEDNLRLEHFRDTHKNKPLIAVNMTSKGSISRVLNNVLTPVTSDLLPNSAAPGQLTVAQINKMYTSMGGIEPKELFVVGKPIGHSRSPILHNTGYEILGLPHKFDKFETGSAQLVKEKLLDGNKNFGGAAVTIPLKLDIMQYMDELTDAAKVIGAVNTVIPLGNKKFKGDNTDWLGIRNALINNGVPEYVGHTAGLVIGAGGTSRAALYALHSLGCKKIFIINRTTSKLKPLIESLPSEFNIIGIESTKSIEEIKEHVGVAVSCVPADKPLDDELLSKLERFLVKGAHAAFVPTLLEAAYKPSVTPVMTISQDKYQWHVVPGSQMLVHQGVAQFEKWTGFKGPFKAIFDAVTKE.

The 3-dehydroquinate synthase stretch occupies residues 1-392 (MVQLAKVPIL…YGDSAQFVSD (392 aa)). Residues 43–45 (DTN), 78–81 (ETSK), 109–111 (GGV), and aspartate 114 each bind NAD(+). Residue arginine 125 coordinates 7-phospho-2-dehydro-3-deoxy-D-arabino-heptonate. 134-135 (TS) contributes to the NAD(+) binding site. 2 residues coordinate 7-phospho-2-dehydro-3-deoxy-D-arabino-heptonate: aspartate 141 and lysine 147. Lysine 156 serves as a coordination point for NAD(+). Residue asparagine 157 coordinates 7-phospho-2-dehydro-3-deoxy-D-arabino-heptonate. NAD(+) contacts are provided by residues 174-177 (WLET) and asparagine 185. A Zn(2+)-binding site is contributed by glutamate 189. 7-phospho-2-dehydro-3-deoxy-D-arabino-heptonate-binding positions include 189-192 (EVIK) and lysine 258. Glutamate 268 functions as the Proton acceptor; for 3-dehydroquinate synthase activity in the catalytic mechanism. 7-phospho-2-dehydro-3-deoxy-D-arabino-heptonate is bound by residues 272 to 276 (RNLLN) and histidine 279. Residue histidine 279 participates in Zn(2+) binding. The active-site Proton acceptor; for 3-dehydroquinate synthase activity is histidine 283. Positions 295 and 364 each coordinate 7-phospho-2-dehydro-3-deoxy-D-arabino-heptonate. Histidine 295 is a Zn(2+) binding site. The EPSP synthase stretch occupies residues 405–871 (VYPFKDIPAD…WDVLHSELGA (467 aa)). The For EPSP synthase activity role is filled by cysteine 853. Positions 890 to 1080 (SVVIIGMRAA…IPSGRSAFVC (191 aa)) are shikimate kinase. ATP is bound at residue 895-902 (GMRAAGKT). The interval 1081-1293 (LTFDDLTEQT…AAPGQLTVAQ (213 aa)) is 3-dehydroquinase. Histidine 1198 functions as the Proton acceptor; for 3-dehydroquinate dehydratase activity in the catalytic mechanism. The active-site Schiff-base intermediate with substrate; for 3-dehydroquinate dehydratase activity is the lysine 1227. A shikimate dehydrogenase region spans residues 1306–1588 (PKELFVVGKP…KAIFDAVTKE (283 aa)).

The protein in the N-terminal section; belongs to the sugar phosphate cyclases superfamily. Dehydroquinate synthase family. It in the 2nd section; belongs to the EPSP synthase family. This sequence in the 3rd section; belongs to the shikimate kinase family. In the 4th section; belongs to the type-I 3-dehydroquinase family. The protein in the C-terminal section; belongs to the shikimate dehydrogenase family. Homodimer. The cofactor is Zn(2+).

It localises to the cytoplasm. It catalyses the reaction 7-phospho-2-dehydro-3-deoxy-D-arabino-heptonate = 3-dehydroquinate + phosphate. The catalysed reaction is 3-dehydroquinate = 3-dehydroshikimate + H2O. It carries out the reaction shikimate + NADP(+) = 3-dehydroshikimate + NADPH + H(+). The enzyme catalyses shikimate + ATP = 3-phosphoshikimate + ADP + H(+). It catalyses the reaction 3-phosphoshikimate + phosphoenolpyruvate = 5-O-(1-carboxyvinyl)-3-phosphoshikimate + phosphate. It functions in the pathway metabolic intermediate biosynthesis; chorismate biosynthesis; chorismate from D-erythrose 4-phosphate and phosphoenolpyruvate: step 2/7. The protein operates within metabolic intermediate biosynthesis; chorismate biosynthesis; chorismate from D-erythrose 4-phosphate and phosphoenolpyruvate: step 3/7. It participates in metabolic intermediate biosynthesis; chorismate biosynthesis; chorismate from D-erythrose 4-phosphate and phosphoenolpyruvate: step 4/7. Its pathway is metabolic intermediate biosynthesis; chorismate biosynthesis; chorismate from D-erythrose 4-phosphate and phosphoenolpyruvate: step 5/7. It functions in the pathway metabolic intermediate biosynthesis; chorismate biosynthesis; chorismate from D-erythrose 4-phosphate and phosphoenolpyruvate: step 6/7. Functionally, the AROM polypeptide catalyzes 5 consecutive enzymatic reactions in prechorismate polyaromatic amino acid biosynthesis. This Saccharomyces cerevisiae (strain RM11-1a) (Baker's yeast) protein is Pentafunctional AROM polypeptide.